A 287-amino-acid polypeptide reads, in one-letter code: Nematocyst expressed protein 6 (287 aa).

Positions 1–20 are cleaved as a signal peptide; sequence MKGFIFAGVLVSALICLAEG. Positions 53 to 249 constitute a Peptidase M12A domain; sequence RAALRDRYLW…RQTNLMYKCN (197 aa). Intrachain disulfides connect Cys-95–Cys-248 and Cys-116–Cys-139. A Zn(2+)-binding site is contributed by His-146. The active site involves Glu-147. Zn(2+)-binding residues include His-150 and His-156. The interval 249 to 287 is disordered; it reads NAQGDSELQPVNDEDEDKDGGDSKKKPDPKGPKPGEIEE. Over residues 268–287 the composition is skewed to basic and acidic residues; it reads GGDSKKKPDPKGPKPGEIEE.

Zn(2+) serves as cofactor. As to expression, nematocyte and pharyngeal gland.

The protein resides in the secreted. Its subcellular location is the nematocyst. Functionally, metalloprotease. The sequence is that of Nematocyst expressed protein 6 from Nematostella vectensis (Starlet sea anemone).